Here is a 163-residue protein sequence, read N- to C-terminus: T-cell surface glycoprotein CD3 zeta chain (163 aa).

Positions 1–21 are cleaved as a signal peptide; it reads MKWKALFTAAILQAQLPITEA. Residues 22–30 lie on the Extracellular side of the membrane; sequence QSFGLLDPK. Residues 31 to 51 traverse the membrane as a helical segment; that stretch reads LCYLLDGILFIYGVILTALFL. Over 52-163 the chain is Cytoplasmic; the sequence is RVKFSRSADA…ALHMQALPPR (112 aa). At Ser-58 the chain carries Phosphoserine. 3 consecutive ITAM domains span residues 61-89, 99-127, and 130-158; these read APAY…LDKR, KPRR…EIGM, and ERRR…LHMQ. A phosphotyrosine mark is found at Tyr-64, Tyr-72, Tyr-83, Tyr-110, Tyr-122, Tyr-141, and Tyr-152. Positions 83-98 are enriched in basic and acidic residues; it reads YDVLDKRRGRDPEMGG. Residues 83-111 form a disordered region; it reads YDVLDKRRGRDPEMGGKPRRKNPQEGLYN.

Belongs to the CD3Z/FCER1G family. The TCR-CD3 complex is composed of a CD3D/CD3E and a CD3G/CD3E heterodimers that preferentially associate with TCRalpha and TCRbeta, respectively, to form TCRalpha/CD3E/CD3G and TCRbeta/CD3G/CD3E trimers. In turn, the hexamer interacts with CD3Z homodimer to form the TCR-CD3 complex. Alternatively, TCRalpha and TCRbeta can be replaced by TCRgamma and TCRdelta. Interacts with SLA. Interacts with TRAT1. Interacts with DOCK2. Interacts with SLA2. Interacts with SHB. Interacts with ZAP70. Interacts (tyrosine phosphorylated) with SHC1 (via SH2 domain). Interacts with PTPRC. Interacts with CRK; this interaction regulates CD3Z phosphorylation. Interacts (on T cell side) with CD81, ICAM1 and CD9 at immunological synapses between antigen-presenting cells and T cells. Interacts with CD160. Interacts with LY6E. Interacts with LY6E. The signaling subunit of immunoglobulin gamma (IgG) Fc receptor complex. As a homodimer or a heterodimer with FCER1G, associates with the ligand binding subunit FCGR3A (via transmembrane domain); this interaction is a prerequisite for Fc receptor complex expression on the cell surface. Interacts with CD5. Post-translationally, phosphorylated on Tyr residues after T-cell receptor triggering by LCK in association with CD4/CD8.

Its subcellular location is the cell membrane. Its function is as follows. Part of the TCR-CD3 complex present on T-lymphocyte cell surface that plays an essential role in adaptive immune response. When antigen presenting cells (APCs) activate T-cell receptor (TCR), TCR-mediated signals are transmitted across the cell membrane by the CD3 chains CD3D, CD3E, CD3G and CD3Z. All CD3 chains contain immunoreceptor tyrosine-based activation motifs (ITAMs) in their cytoplasmic domain. Upon TCR engagement, these motifs become phosphorylated by Src family protein tyrosine kinases LCK and FYN, resulting in the activation of downstream signaling pathways. CD3Z ITAMs phosphorylation creates multiple docking sites for the protein kinase ZAP70 leading to ZAP70 phosphorylation and its conversion into a catalytically active enzyme. Plays an important role in intrathymic T-cell differentiation. Additionally, participates in the activity-dependent synapse formation of retinal ganglion cells (RGCs) in both the retina and dorsal lateral geniculate nucleus (dLGN). The protein is T-cell surface glycoprotein CD3 zeta chain (CD247) of Sus scrofa (Pig).